A 502-amino-acid polypeptide reads, in one-letter code: Hexose transporter 1 (502 aa).

Over 1–26 (MKKSSKEISSSQSLKNGGSDHFFNTS) the chain is Cytoplasmic. A helical membrane pass occupies residues 27–47 (LMYVLAACLASFIFGYQVSVL). The Extracellular segment spans residues 48–76 (NTIKNFIVIEFGWCTGNKVECDDSTLKSS). A disulfide bond links C61 and C68. A helical membrane pass occupies residues 77 to 97 (FLLASVFIGAVVGSGFSGYLV). The Cytoplasmic segment spans residues 98–102 (QHGRR). A helical transmembrane segment spans residues 103-123 (FSLLVIYNFFILVSILTSITH). Residues 124–132 (HFHTILFSR) are Extracellular-facing. The helical transmembrane segment at 133 to 153 (LLSGFGIGLITVSVPMYISEM) threads the bilayer. Residues 154–163 (THKDKKGAYG) lie on the Cytoplasmic side of the membrane. The helical transmembrane segment at 164–184 (VLHQLFITFGIFVAVLLGMAM) threads the bilayer. An alpha-D-glucose-binding site is contributed by Q167. Q167 serves as a coordination point for beta-D-glucose. Topologically, residues 185–205 (GEAPDAKSVDALGEFQKIWWR) are extracellular. The chain crosses the membrane as a helical span at residues 206–226 (LMFFFPCLISILGIVLLTFFY). The Cytoplasmic segment spans residues 227–291 (KEETPYYLFE…RAMQIPSYRN (65 aa)). The helical transmembrane segment at 292–312 (VILLGCILSGLQQFTGINVLV) threads the bilayer. Alpha-D-glucose is bound by residues Q303, Q304, and N309. Residue Q303 participates in beta-D-glucose binding. N309 contributes to the beta-D-glucose binding site. Residues 313-329 (SNSNELYKEFLSNKLIT) lie on the Extracellular side of the membrane. Residues 330-350 (TLSVIMTVVNFLMTFPAIYIV) traverse the membrane as a helical segment. N339 contacts beta-D-glucose. At 351 to 356 (EKLGRK) the chain is on the cytoplasmic side. Residues 357-377 (TLLLCGCAGVICAFLPTAIAN) form a helical membrane-spanning segment. At 378 to 390 (QIDSTSAFVKNLS) the chain is on the extracellular side. The helical transmembrane segment at 391 to 411 (IAATFVMIISFAVSYGPVLWI) threads the bilayer. W410 provides a ligand contact to alpha-D-glucose. Topologically, residues 412–427 (YLHEMFPSEIKDSAAS) are cytoplasmic. A helical transmembrane segment spans residues 428–448 (LASLVNWVCAIIVVFPSDIII). The Extracellular segment spans residues 449-453 (KKSPT). A helical transmembrane segment spans residues 454-474 (ILFFIFSGMSILSFLFIFFFI). Over 475 to 502 (KETKGGEIGTSPYITMEERQKHMGKSAV) the chain is Cytoplasmic.

The protein belongs to the major facilitator superfamily. Sugar transporter (TC 2.A.1.1) family. Homodimer.

It localises to the cell membrane. The catalysed reaction is D-glucose(out) = D-glucose(in). The enzyme catalyses D-fructose(out) = D-fructose(in). It catalyses the reaction D-galactose(in) = D-galactose(out). It carries out the reaction D-mannose(out) = D-mannose(in). The catalysed reaction is D-glucosamine(out) = D-glucosamine(in). The enzyme catalyses D-xylose(out) = D-xylose(in). With respect to regulation, inhibited by compound 3361 (3-O-((undec-10-en)-1-yl)-D-glucose). Its function is as follows. Sodium-independent facilitative hexose transporter. Can transport D-glucose and D-fructose. Can transport D-mannose, D-galactose, D-xylose and D-glucosamine. The protein is Hexose transporter 1 of Plasmodium vivax (strain Brazil I).